Here is a 254-residue protein sequence, read N- to C-terminus: Diphthine synthase (254 aa).

S-adenosyl-L-methionine-binding positions include D83, L86, 111–112 (SI), L163, and V205.

Belongs to the diphthine synthase family. As to quaternary structure, homodimer.

The enzyme catalyses 2-[(3S)-amino-3-carboxypropyl]-L-histidyl-[translation elongation factor 2] + 3 S-adenosyl-L-methionine = diphthine-[translation elongation factor 2] + 3 S-adenosyl-L-homocysteine + 3 H(+). The protein operates within protein modification; peptidyl-diphthamide biosynthesis. In terms of biological role, S-adenosyl-L-methionine-dependent methyltransferase that catalyzes the trimethylation of the amino group of the modified target histidine residue in translation elongation factor 2 (EF-2), to form an intermediate called diphthine. The three successive methylation reactions represent the second step of diphthamide biosynthesis. In Pyrobaculum aerophilum (strain ATCC 51768 / DSM 7523 / JCM 9630 / CIP 104966 / NBRC 100827 / IM2), this protein is Diphthine synthase.